The following is a 121-amino-acid chain: Large ribosomal subunit protein uL14 (121 aa).

Belongs to the universal ribosomal protein uL14 family. As to quaternary structure, part of the 50S ribosomal subunit. Forms a cluster with proteins L3 and L19. In the 70S ribosome, L14 and L19 interact and together make contacts with the 16S rRNA in bridges B5 and B8.

Its function is as follows. Binds to 23S rRNA. Forms part of two intersubunit bridges in the 70S ribosome. This chain is Large ribosomal subunit protein uL14, found in Prochlorococcus marinus (strain MIT 9313).